A 350-amino-acid polypeptide reads, in one-letter code: Phenylalanine--tRNA ligase alpha subunit (350 aa).

Residue glutamate 259 participates in Mg(2+) binding.

It belongs to the class-II aminoacyl-tRNA synthetase family. Phe-tRNA synthetase alpha subunit type 1 subfamily. In terms of assembly, tetramer of two alpha and two beta subunits. The cofactor is Mg(2+).

The protein resides in the cytoplasm. It catalyses the reaction tRNA(Phe) + L-phenylalanine + ATP = L-phenylalanyl-tRNA(Phe) + AMP + diphosphate + H(+). The polypeptide is Phenylalanine--tRNA ligase alpha subunit (Rickettsia typhi (strain ATCC VR-144 / Wilmington)).